A 202-amino-acid chain; its full sequence is NADH-quinone oxidoreductase subunit C (202 aa).

The protein belongs to the complex I 30 kDa subunit family. In terms of assembly, NDH-1 is composed of 14 different subunits. Subunits NuoB, C, D, E, F, and G constitute the peripheral sector of the complex.

The protein localises to the cell inner membrane. It catalyses the reaction a quinone + NADH + 5 H(+)(in) = a quinol + NAD(+) + 4 H(+)(out). NDH-1 shuttles electrons from NADH, via FMN and iron-sulfur (Fe-S) centers, to quinones in the respiratory chain. The immediate electron acceptor for the enzyme in this species is believed to be ubiquinone. Couples the redox reaction to proton translocation (for every two electrons transferred, four hydrogen ions are translocated across the cytoplasmic membrane), and thus conserves the redox energy in a proton gradient. This Paracidovorax citrulli (strain AAC00-1) (Acidovorax citrulli) protein is NADH-quinone oxidoreductase subunit C.